We begin with the raw amino-acid sequence, 90 residues long: Small ribosomal subunit protein uS15 (90 aa).

It belongs to the universal ribosomal protein uS15 family. As to quaternary structure, part of the 30S ribosomal subunit. Forms a bridge to the 50S subunit in the 70S ribosome, contacting the 23S rRNA.

Its function is as follows. One of the primary rRNA binding proteins, it binds directly to 16S rRNA where it helps nucleate assembly of the platform of the 30S subunit by binding and bridging several RNA helices of the 16S rRNA. Functionally, forms an intersubunit bridge (bridge B4) with the 23S rRNA of the 50S subunit in the ribosome. The protein is Small ribosomal subunit protein uS15 of Helicobacter pylori (strain HPAG1).